The following is a 295-amino-acid chain: Small ribosomal subunit protein uS2 (295 aa).

The tract at residues 264-295 (KFSKTKNIDEETNTEFEQALNDTDENKNADNA) is disordered.

The protein belongs to the universal ribosomal protein uS2 family.

The sequence is that of Small ribosomal subunit protein uS2 from Rickettsia akari (strain Hartford).